The sequence spans 184 residues: ATP synthase subunit b, chloroplastic (184 aa).

The chain crosses the membrane as a helical span at residues 27 to 49; it reads LATNPINLSVVFGVLIFFGKGVL.

This sequence belongs to the ATPase B chain family. In terms of assembly, F-type ATPases have 2 components, F(1) - the catalytic core - and F(0) - the membrane proton channel. F(1) has five subunits: alpha(3), beta(3), gamma(1), delta(1), epsilon(1). F(0) has four main subunits: a(1), b(1), b'(1) and c(10-14). The alpha and beta chains form an alternating ring which encloses part of the gamma chain. F(1) is attached to F(0) by a central stalk formed by the gamma and epsilon chains, while a peripheral stalk is formed by the delta, b and b' chains.

It localises to the plastid. The protein localises to the chloroplast thylakoid membrane. Its function is as follows. F(1)F(0) ATP synthase produces ATP from ADP in the presence of a proton or sodium gradient. F-type ATPases consist of two structural domains, F(1) containing the extramembraneous catalytic core and F(0) containing the membrane proton channel, linked together by a central stalk and a peripheral stalk. During catalysis, ATP synthesis in the catalytic domain of F(1) is coupled via a rotary mechanism of the central stalk subunits to proton translocation. Functionally, component of the F(0) channel, it forms part of the peripheral stalk, linking F(1) to F(0). The chain is ATP synthase subunit b, chloroplastic from Arabidopsis thaliana (Mouse-ear cress).